Reading from the N-terminus, the 152-residue chain is Ubiquitin-conjugating enzyme E2 1 (152 aa).

Positions 4-150 (PARKRLMRDF…VRDVVEQSWT (147 aa)) constitute a UBC core domain. The active-site Glycyl thioester intermediate is the Cys88. The interval 119–152 (NSPANSEAARMYSESKREYNRRVRDVVEQSWTAD) is disordered. The span at 131–145 (SESKREYNRRVRDVV) shows a compositional bias: basic and acidic residues.

It belongs to the ubiquitin-conjugating enzyme family. As to expression, ubiquitously expressed.

It catalyses the reaction S-ubiquitinyl-[E1 ubiquitin-activating enzyme]-L-cysteine + [E2 ubiquitin-conjugating enzyme]-L-cysteine = [E1 ubiquitin-activating enzyme]-L-cysteine + S-ubiquitinyl-[E2 ubiquitin-conjugating enzyme]-L-cysteine.. Its pathway is protein modification; protein ubiquitination. Functionally, accepts the ubiquitin from the E1 complex and catalyzes its covalent attachment to other proteins. This Arabidopsis thaliana (Mouse-ear cress) protein is Ubiquitin-conjugating enzyme E2 1 (UBC1).